Consider the following 510-residue polypeptide: GMP synthase [glutamine-hydrolyzing] (510 aa).

Positions 5–195 (LVLVIDFGGQ…LFKICGLKED (191 aa)) constitute a Glutamine amidotransferase type-1 domain. C82 serves as the catalytic Nucleophile. Active-site residues include H169 and E171. Residues 196 to 385 (WSMSSFAKEK…LGIPHKLVWR (190 aa)) form the GMPS ATP-PPase domain. 223-229 (SGGVDSS) is a binding site for ATP.

In terms of assembly, homodimer.

It carries out the reaction XMP + L-glutamine + ATP + H2O = GMP + L-glutamate + AMP + diphosphate + 2 H(+). It functions in the pathway purine metabolism; GMP biosynthesis; GMP from XMP (L-Gln route): step 1/1. Functionally, catalyzes the synthesis of GMP from XMP. This chain is GMP synthase [glutamine-hydrolyzing], found in Clostridium acetobutylicum (strain ATCC 824 / DSM 792 / JCM 1419 / IAM 19013 / LMG 5710 / NBRC 13948 / NRRL B-527 / VKM B-1787 / 2291 / W).